We begin with the raw amino-acid sequence, 338 residues long: Glyceraldehyde-3-phosphate dehydrogenase 1 (338 aa).

NAD(+) contacts are provided by residues 13 to 14 (TI) and Gly-111. 140-142 (SCN) contributes to the D-glyceraldehyde 3-phosphate binding site. The Nucleophile role is filled by Cys-141. Arg-169 serves as a coordination point for NAD(+). 195–196 (HG) is a D-glyceraldehyde 3-phosphate binding site. Position 300 (Gln-300) interacts with NAD(+).

Belongs to the glyceraldehyde-3-phosphate dehydrogenase family. In terms of assembly, homotetramer.

The protein resides in the cytoplasm. It catalyses the reaction D-glyceraldehyde 3-phosphate + phosphate + NADP(+) = (2R)-3-phospho-glyceroyl phosphate + NADPH + H(+). It carries out the reaction D-glyceraldehyde 3-phosphate + phosphate + NAD(+) = (2R)-3-phospho-glyceroyl phosphate + NADH + H(+). The protein operates within carbohydrate degradation; glycolysis; pyruvate from D-glyceraldehyde 3-phosphate: step 1/5. The chain is Glyceraldehyde-3-phosphate dehydrogenase 1 from Methanosarcina barkeri (strain Fusaro / DSM 804).